The primary structure comprises 223 residues: Cytidylate kinase (223 aa).

ATP is bound at residue 10 to 18 (GPAGTGKSS).

The protein belongs to the cytidylate kinase family. Type 1 subfamily.

The protein localises to the cytoplasm. It catalyses the reaction CMP + ATP = CDP + ADP. It carries out the reaction dCMP + ATP = dCDP + ADP. This is Cytidylate kinase from Mycobacterium leprae (strain Br4923).